The following is a 286-amino-acid chain: Pantothenate synthetase (286 aa).

30–37 (MGNLHDGH) contributes to the ATP binding site. Residue H37 is the Proton donor of the active site. A (R)-pantoate-binding site is contributed by Q61. Position 61 (Q61) interacts with beta-alanine. Residue 148–151 (GKKD) coordinates ATP. Q154 contacts (R)-pantoate. ATP is bound by residues V177 and 185-188 (LSSR).

The protein belongs to the pantothenate synthetase family. As to quaternary structure, homodimer.

Its subcellular location is the cytoplasm. It carries out the reaction (R)-pantoate + beta-alanine + ATP = (R)-pantothenate + AMP + diphosphate + H(+). It functions in the pathway cofactor biosynthesis; (R)-pantothenate biosynthesis; (R)-pantothenate from (R)-pantoate and beta-alanine: step 1/1. Catalyzes the condensation of pantoate with beta-alanine in an ATP-dependent reaction via a pantoyl-adenylate intermediate. The polypeptide is Pantothenate synthetase (Psychrobacter sp. (strain PRwf-1)).